The chain runs to 590 residues: Potassium-transporting ATPase potassium-binding subunit (590 aa).

The next 10 helical transmembrane spans lie at I11–F31, T64–I84, G136–I156, I178–V198, M273–M293, W301–A321, A403–V423, A442–L462, L511–G531, and L552–A572.

Belongs to the KdpA family. The system is composed of three essential subunits: KdpA, KdpB and KdpC.

It localises to the cell inner membrane. Its function is as follows. Part of the high-affinity ATP-driven potassium transport (or Kdp) system, which catalyzes the hydrolysis of ATP coupled with the electrogenic transport of potassium into the cytoplasm. This subunit binds the periplasmic potassium ions and delivers the ions to the membrane domain of KdpB through an intramembrane tunnel. In Acidobacterium capsulatum (strain ATCC 51196 / DSM 11244 / BCRC 80197 / JCM 7670 / NBRC 15755 / NCIMB 13165 / 161), this protein is Potassium-transporting ATPase potassium-binding subunit.